Consider the following 68-residue polypeptide: Large ribosomal subunit protein bL32 (68 aa).

This sequence belongs to the bacterial ribosomal protein bL32 family.

The protein is Large ribosomal subunit protein bL32 of Orientia tsutsugamushi (strain Boryong) (Rickettsia tsutsugamushi).